A 946-amino-acid chain; its full sequence is Bifunctional glutamine synthetase adenylyltransferase/adenylyl-removing enzyme (946 aa).

The adenylyl removase stretch occupies residues 1–440; it reads MKPLSSPLQQ…VFNELIGDDE (440 aa). The interval 449-946 is adenylyl transferase; that stretch reads SEQWRELWQD…ASWQKWLVEE (498 aa).

The protein belongs to the GlnE family. The cofactor is Mg(2+).

The catalysed reaction is [glutamine synthetase]-O(4)-(5'-adenylyl)-L-tyrosine + phosphate = [glutamine synthetase]-L-tyrosine + ADP. It carries out the reaction [glutamine synthetase]-L-tyrosine + ATP = [glutamine synthetase]-O(4)-(5'-adenylyl)-L-tyrosine + diphosphate. Functionally, involved in the regulation of glutamine synthetase GlnA, a key enzyme in the process to assimilate ammonia. When cellular nitrogen levels are high, the C-terminal adenylyl transferase (AT) inactivates GlnA by covalent transfer of an adenylyl group from ATP to specific tyrosine residue of GlnA, thus reducing its activity. Conversely, when nitrogen levels are low, the N-terminal adenylyl removase (AR) activates GlnA by removing the adenylyl group by phosphorolysis, increasing its activity. The regulatory region of GlnE binds the signal transduction protein PII (GlnB) which indicates the nitrogen status of the cell. In Shigella boydii serotype 4 (strain Sb227), this protein is Bifunctional glutamine synthetase adenylyltransferase/adenylyl-removing enzyme.